We begin with the raw amino-acid sequence, 72 residues long: Translation initiation factor IF-1 (72 aa).

The S1-like domain maps to 1–72 (MSKDDCIEFE…TKGRIIYRMK (72 aa)).

Belongs to the IF-1 family. Component of the 30S ribosomal translation pre-initiation complex which assembles on the 30S ribosome in the order IF-2 and IF-3, IF-1 and N-formylmethionyl-tRNA(fMet); mRNA recruitment can occur at any time during PIC assembly.

Its subcellular location is the cytoplasm. Functionally, one of the essential components for the initiation of protein synthesis. Stabilizes the binding of IF-2 and IF-3 on the 30S subunit to which N-formylmethionyl-tRNA(fMet) subsequently binds. Helps modulate mRNA selection, yielding the 30S pre-initiation complex (PIC). Upon addition of the 50S ribosomal subunit IF-1, IF-2 and IF-3 are released leaving the mature 70S translation initiation complex. The polypeptide is Translation initiation factor IF-1 (Xylella fastidiosa (strain Temecula1 / ATCC 700964)).